Reading from the N-terminus, the 279-residue chain is Shikimate dehydrogenase (NADP(+)) (279 aa).

Shikimate-binding positions include Ser19–Ser21 and Thr66. Residue Lys70 is the Proton acceptor of the active site. Shikimate is bound by residues Asn91 and Asp106. NADP(+) is bound by residues Gly129–Ala133 and Phe222. Tyr224 is a shikimate binding site. An NADP(+)-binding site is contributed by Gly243.

Belongs to the shikimate dehydrogenase family. In terms of assembly, homodimer.

It catalyses the reaction shikimate + NADP(+) = 3-dehydroshikimate + NADPH + H(+). It functions in the pathway metabolic intermediate biosynthesis; chorismate biosynthesis; chorismate from D-erythrose 4-phosphate and phosphoenolpyruvate: step 4/7. Functionally, involved in the biosynthesis of the chorismate, which leads to the biosynthesis of aromatic amino acids. Catalyzes the reversible NADPH linked reduction of 3-dehydroshikimate (DHSA) to yield shikimate (SA). The sequence is that of Shikimate dehydrogenase (NADP(+)) from Anaeromyxobacter sp. (strain Fw109-5).